Reading from the N-terminus, the 711-residue chain is Polyribonucleotide nucleotidyltransferase (711 aa).

Mg(2+) contacts are provided by D486 and D492. In terms of domain architecture, KH spans 553–612; sequence PRIHTIKINPDKIKDVIGKGGSVIRALTEETGTTIEIEDDGTVKIAATDGEKAKHAIRRI. The S1 motif domain occupies 622-690; the sequence is GRVYTGKVTR…RQGRIRLSIK (69 aa). The interval 689–711 is disordered; that stretch reads IKEATEQSQPAAAPEAPAAEQGE. A compositionally biased stretch (low complexity) spans 694-711; that stretch reads EQSQPAAAPEAPAAEQGE.

It belongs to the polyribonucleotide nucleotidyltransferase family. Component of the RNA degradosome, which is a multiprotein complex involved in RNA processing and mRNA degradation. It depends on Mg(2+) as a cofactor.

The protein resides in the cytoplasm. It carries out the reaction RNA(n+1) + phosphate = RNA(n) + a ribonucleoside 5'-diphosphate. In terms of biological role, involved in mRNA degradation. Catalyzes the phosphorolysis of single-stranded polyribonucleotides processively in the 3'- to 5'-direction. The sequence is that of Polyribonucleotide nucleotidyltransferase from Escherichia coli (strain ATCC 8739 / DSM 1576 / NBRC 3972 / NCIMB 8545 / WDCM 00012 / Crooks).